The primary structure comprises 146 residues: MLVLIQRASQAAVHVDDEVVGQIGPGLLALVGMEPGDTEAQLQRMAERLLGYRVFADEAGKMNRSLRDTGGGLLLVSQFTLAADTRSGMRPSFTSAAPPAEAEQGFNRFVEICRENHAPGVETGRFGAHMVVSLVNDGPVTFLLRP.

The Gly-cisPro motif, important for rejection of L-amino acids motif lies at 138-139 (GP).

The protein belongs to the DTD family. Homodimer.

It is found in the cytoplasm. It carries out the reaction glycyl-tRNA(Ala) + H2O = tRNA(Ala) + glycine + H(+). The enzyme catalyses a D-aminoacyl-tRNA + H2O = a tRNA + a D-alpha-amino acid + H(+). Functionally, an aminoacyl-tRNA editing enzyme that deacylates mischarged D-aminoacyl-tRNAs. Also deacylates mischarged glycyl-tRNA(Ala), protecting cells against glycine mischarging by AlaRS. Acts via tRNA-based rather than protein-based catalysis; rejects L-amino acids rather than detecting D-amino acids in the active site. By recycling D-aminoacyl-tRNA to D-amino acids and free tRNA molecules, this enzyme counteracts the toxicity associated with the formation of D-aminoacyl-tRNA entities in vivo and helps enforce protein L-homochirality. The chain is D-aminoacyl-tRNA deacylase from Stenotrophomonas maltophilia (strain R551-3).